The primary structure comprises 580 residues: MNYLVNYCKISFYFLMSISLSLFLISLKFLLMDLVYFIEWEILSLQSMSIVMTFLFDWMSLMFMSFVLLISSLVIFYSNQYMEEDYNINRFILLVLMFVMSMMMLIISPNLISILLGWDGLGLVSYCLVIYFQNVKSYNAGMLTALSNRIGDVALLLAIAWMLNYGSWNYIFYLDMMKNNIEMMIIGGLVMLAAMTKSAQIPFSSWLPAAMAAPTPVSALVHSSTLVTAGVYLLIRFNDVLMNWWMAQFLLLVSGLTMFMAGLGANFEFDLKKIIALSTLSQLGLMMSILSMGFYKLAFFHLLTHALFKALLFMCAGSIIHNMKNSQDIRMMGSLSMSMPLTCSCFNVANLALCGMPFLAGFYSKDLILEMVMLSYVNVFSFFLFFFSTGLTVCYSFRLVYYSMTGDFNSSSLHPLNDSGWTMLFSICFLTVMAVIGGSMLSWLMFLNPAMICLPLEMKLLTLFVCIVGGLMGYLISDVKLFFTNKALYFYNFTNFVGSMWFMPVISTLGVINYPLKLGLYSYKSFDQGWSEFFGGQMVYFQLKNYSLYLQEFQSNSLKIYLLSYMLWFIILLMLVVLVN.

16 consecutive transmembrane segments (helical) span residues 12–32 (FYFL…FLLM), 50–70 (IVMT…VLLI), 92–112 (ILLV…PNLI), 113–133 (SILL…IYFQ), 153–173 (VALL…YIFY), 183–203 (MMII…QIPF), 215–235 (TPVS…YLLI), 244–264 (WWMA…AGLG), 274–293 (IIAL…LSMG), 298–320 (AFFH…GSII), 343–363 (CSCF…AGFY), 367–387 (LILE…LFFF), 427–447 (ICFL…LMFL), 463–483 (LFVC…KLFF), 496–516 (FVGS…NYPL), and 560–580 (IYLL…VLVN).

The protein belongs to the complex I subunit 5 family.

The protein localises to the mitochondrion inner membrane. It carries out the reaction a ubiquinone + NADH + 5 H(+)(in) = a ubiquinol + NAD(+) + 4 H(+)(out). Its function is as follows. Core subunit of the mitochondrial membrane respiratory chain NADH dehydrogenase (Complex I) that is believed to belong to the minimal assembly required for catalysis. Complex I functions in the transfer of electrons from NADH to the respiratory chain. The immediate electron acceptor for the enzyme is believed to be ubiquinone. This Anopheles gambiae (African malaria mosquito) protein is NADH-ubiquinone oxidoreductase chain 5 (mt:ND5).